Reading from the N-terminus, the 93-residue chain is Small ribosomal subunit protein uS19 (93 aa).

It belongs to the universal ribosomal protein uS19 family.

In terms of biological role, protein S19 forms a complex with S13 that binds strongly to the 16S ribosomal RNA. This is Small ribosomal subunit protein uS19 from Lactobacillus helveticus (strain DPC 4571).